The sequence spans 272 residues: Shikimate dehydrogenase (NADP(+)) (272 aa).

Shikimate contacts are provided by residues 14-16 and threonine 61; that span reads SKS. Lysine 65 acts as the Proton acceptor in catalysis. Position 77 (glutamate 77) interacts with NADP(+). Residues asparagine 86 and aspartate 102 each coordinate shikimate. Residues 126-130, 149-154, and methionine 213 each bind NADP(+); these read GAGGA and NRTASR. Tyrosine 215 contacts shikimate. Residue glycine 237 participates in NADP(+) binding.

The protein belongs to the shikimate dehydrogenase family. Homodimer.

The catalysed reaction is shikimate + NADP(+) = 3-dehydroshikimate + NADPH + H(+). It participates in metabolic intermediate biosynthesis; chorismate biosynthesis; chorismate from D-erythrose 4-phosphate and phosphoenolpyruvate: step 4/7. Functionally, involved in the biosynthesis of the chorismate, which leads to the biosynthesis of aromatic amino acids. Catalyzes the reversible NADPH linked reduction of 3-dehydroshikimate (DHSA) to yield shikimate (SA). The sequence is that of Shikimate dehydrogenase (NADP(+)) from Salmonella enteritidis PT4 (strain P125109).